Here is a 749-residue protein sequence, read N- to C-terminus: Patatin-like phospholipase domain-containing protein AN0408 (749 aa).

Over residues 1 to 11 (MEKSAAGDNID) the composition is skewed to basic and acidic residues. Residues 1 to 21 (MEKSAAGDNIDKYSPSSIPDY) are disordered. The chain crosses the membrane as a helical span at residues 92–112 (WPFLLFVLGWITFLSVGYALT). A PNPLA domain is found at 280-471 (LCLSGGATFA…RTDIPIKALN (192 aa)). Residues 311–315 (GTSGG) carry the GXSXG motif. The active-site Nucleophile is the serine 313. Aspartate 458 acts as the Proton acceptor in catalysis. The interval 630–659 (SIQPFPFDNGAAGADQKSNDPREERLNRNF) is disordered. A compositionally biased stretch (basic and acidic residues) spans 646–659 (KSNDPREERLNRNF).

Belongs to the PLPL family.

It is found in the membrane. Probable lipid hydrolase. In Emericella nidulans (strain FGSC A4 / ATCC 38163 / CBS 112.46 / NRRL 194 / M139) (Aspergillus nidulans), this protein is Patatin-like phospholipase domain-containing protein AN0408.